A 122-amino-acid chain; its full sequence is Large ribosomal subunit protein uL14 (122 aa).

This sequence belongs to the universal ribosomal protein uL14 family. As to quaternary structure, part of the 50S ribosomal subunit. Forms a cluster with proteins L3 and L19. In the 70S ribosome, L14 and L19 interact and together make contacts with the 16S rRNA in bridges B5 and B8.

Functionally, binds to 23S rRNA. Forms part of two intersubunit bridges in the 70S ribosome. This is Large ribosomal subunit protein uL14 from Shewanella baltica (strain OS223).